Here is a 946-residue protein sequence, read N- to C-terminus: Bifunctional glutamine synthetase adenylyltransferase/adenylyl-removing enzyme (946 aa).

The adenylyl removase stretch occupies residues 1 to 440; that stretch reads MKPLSSPLQQ…VFNELIGDDE (440 aa). The interval 449–946 is adenylyl transferase; the sequence is SEQWRELWQD…ASWQKWLVEE (498 aa).

This sequence belongs to the GlnE family. It depends on Mg(2+) as a cofactor.

It catalyses the reaction [glutamine synthetase]-O(4)-(5'-adenylyl)-L-tyrosine + phosphate = [glutamine synthetase]-L-tyrosine + ADP. It carries out the reaction [glutamine synthetase]-L-tyrosine + ATP = [glutamine synthetase]-O(4)-(5'-adenylyl)-L-tyrosine + diphosphate. Functionally, involved in the regulation of glutamine synthetase GlnA, a key enzyme in the process to assimilate ammonia. When cellular nitrogen levels are high, the C-terminal adenylyl transferase (AT) inactivates GlnA by covalent transfer of an adenylyl group from ATP to specific tyrosine residue of GlnA, thus reducing its activity. Conversely, when nitrogen levels are low, the N-terminal adenylyl removase (AR) activates GlnA by removing the adenylyl group by phosphorolysis, increasing its activity. The regulatory region of GlnE binds the signal transduction protein PII (GlnB) which indicates the nitrogen status of the cell. The protein is Bifunctional glutamine synthetase adenylyltransferase/adenylyl-removing enzyme of Escherichia coli O8 (strain IAI1).